The primary structure comprises 177 residues: ATP synthase subunit delta (177 aa).

It belongs to the ATPase delta chain family. In terms of assembly, F-type ATPases have 2 components, F(1) - the catalytic core - and F(0) - the membrane proton channel. F(1) has five subunits: alpha(3), beta(3), gamma(1), delta(1), epsilon(1). F(0) has three main subunits: a(1), b(2) and c(10-14). The alpha and beta chains form an alternating ring which encloses part of the gamma chain. F(1) is attached to F(0) by a central stalk formed by the gamma and epsilon chains, while a peripheral stalk is formed by the delta and b chains.

The protein resides in the cell inner membrane. In terms of biological role, f(1)F(0) ATP synthase produces ATP from ADP in the presence of a proton or sodium gradient. F-type ATPases consist of two structural domains, F(1) containing the extramembraneous catalytic core and F(0) containing the membrane proton channel, linked together by a central stalk and a peripheral stalk. During catalysis, ATP synthesis in the catalytic domain of F(1) is coupled via a rotary mechanism of the central stalk subunits to proton translocation. Its function is as follows. This protein is part of the stalk that links CF(0) to CF(1). It either transmits conformational changes from CF(0) to CF(1) or is implicated in proton conduction. This chain is ATP synthase subunit delta, found in Flavobacterium psychrophilum (strain ATCC 49511 / DSM 21280 / CIP 103535 / JIP02/86).